Reading from the N-terminus, the 274-residue chain is Formamidopyrimidine-DNA glycosylase (274 aa).

The active-site Schiff-base intermediate with DNA is Pro-2. The Proton donor role is filled by Glu-3. Catalysis depends on Lys-58, which acts as the Proton donor; for beta-elimination activity. The DNA site is built by His-91, Arg-110, and Lys-152. An FPG-type zinc finger spans residues 237-271; the sequence is KVYGRKNLPCLVCENKIETVVIAGRHSAFCPHCQP. Arg-261 functions as the Proton donor; for delta-elimination activity in the catalytic mechanism.

Belongs to the FPG family. Monomer. Requires Zn(2+) as cofactor.

It catalyses the reaction Hydrolysis of DNA containing ring-opened 7-methylguanine residues, releasing 2,6-diamino-4-hydroxy-5-(N-methyl)formamidopyrimidine.. It carries out the reaction 2'-deoxyribonucleotide-(2'-deoxyribose 5'-phosphate)-2'-deoxyribonucleotide-DNA = a 3'-end 2'-deoxyribonucleotide-(2,3-dehydro-2,3-deoxyribose 5'-phosphate)-DNA + a 5'-end 5'-phospho-2'-deoxyribonucleoside-DNA + H(+). Its function is as follows. Involved in base excision repair of DNA damaged by oxidation or by mutagenic agents. Acts as a DNA glycosylase that recognizes and removes damaged bases. Has a preference for oxidized purines, such as 7,8-dihydro-8-oxoguanine (8-oxoG). Has AP (apurinic/apyrimidinic) lyase activity and introduces nicks in the DNA strand. Cleaves the DNA backbone by beta-delta elimination to generate a single-strand break at the site of the removed base with both 3'- and 5'-phosphates. The polypeptide is Formamidopyrimidine-DNA glycosylase (Legionella pneumophila (strain Lens)).